Reading from the N-terminus, the 282-residue chain is Acetyl-coenzyme A carboxylase carboxyl transferase subunit beta 1 (282 aa).

Residues 23 to 282 (LMTKCPECRH…MHTKGGVQHV (260 aa)) enclose the CoA carboxyltransferase N-terminal domain. Positions 27, 30, 46, and 49 each coordinate Zn(2+). Residues 27-49 (CPECRHILLTKELEKNHKVCTKC) form a C4-type zinc finger.

The protein belongs to the AccD/PCCB family. As to quaternary structure, acetyl-CoA carboxylase is a heterohexamer composed of biotin carboxyl carrier protein (AccB), biotin carboxylase (AccC) and two subunits each of ACCase subunit alpha (AccA) and ACCase subunit beta (AccD). Zn(2+) is required as a cofactor.

It is found in the cytoplasm. It catalyses the reaction N(6)-carboxybiotinyl-L-lysyl-[protein] + acetyl-CoA = N(6)-biotinyl-L-lysyl-[protein] + malonyl-CoA. The protein operates within lipid metabolism; malonyl-CoA biosynthesis; malonyl-CoA from acetyl-CoA: step 1/1. Functionally, component of the acetyl coenzyme A carboxylase (ACC) complex. Biotin carboxylase (BC) catalyzes the carboxylation of biotin on its carrier protein (BCCP) and then the CO(2) group is transferred by the transcarboxylase to acetyl-CoA to form malonyl-CoA. The protein is Acetyl-coenzyme A carboxylase carboxyl transferase subunit beta 1 of Lysinibacillus sphaericus (strain C3-41).